The chain runs to 270 residues: Putative phosphoenolpyruvate synthase regulatory protein (270 aa).

151–158 serves as a coordination point for ADP; the sequence is GVSRCGKT.

It belongs to the pyruvate, phosphate/water dikinase regulatory protein family. PSRP subfamily.

The enzyme catalyses [pyruvate, water dikinase] + ADP = [pyruvate, water dikinase]-phosphate + AMP + H(+). The catalysed reaction is [pyruvate, water dikinase]-phosphate + phosphate + H(+) = [pyruvate, water dikinase] + diphosphate. Its function is as follows. Bifunctional serine/threonine kinase and phosphorylase involved in the regulation of the phosphoenolpyruvate synthase (PEPS) by catalyzing its phosphorylation/dephosphorylation. This is Putative phosphoenolpyruvate synthase regulatory protein from Methylobacillus flagellatus (strain ATCC 51484 / DSM 6875 / VKM B-1610 / KT).